Consider the following 333-residue polypeptide: Fructose-1,6-bisphosphatase class 1 (333 aa).

Mg(2+) is bound by residues Glu-92, Asp-113, Leu-115, and Asp-116. Substrate is bound by residues Asp-116 to Ser-119, Asn-209, Tyr-242, and Lys-272. Glu-278 serves as a coordination point for Mg(2+).

It belongs to the FBPase class 1 family. As to quaternary structure, homotetramer. Mg(2+) is required as a cofactor.

The protein localises to the cytoplasm. The catalysed reaction is beta-D-fructose 1,6-bisphosphate + H2O = beta-D-fructose 6-phosphate + phosphate. It participates in carbohydrate biosynthesis; Calvin cycle. The sequence is that of Fructose-1,6-bisphosphatase class 1 from Chlorobaculum tepidum (strain ATCC 49652 / DSM 12025 / NBRC 103806 / TLS) (Chlorobium tepidum).